The primary structure comprises 332 residues: uncharacterized protein (332 aa).

An N-terminal signal peptide occupies residues 1–26; it reads MSSLGKLLKLTLLGILLSFSCKFVFG.

Its subcellular location is the endoplasmic reticulum. This is an uncharacterized protein from Schizosaccharomyces pombe (strain 972 / ATCC 24843) (Fission yeast).